Consider the following 88-residue polypeptide: Small ribosomal subunit protein uS17 (88 aa).

The protein belongs to the universal ribosomal protein uS17 family. As to quaternary structure, part of the 30S ribosomal subunit.

Its function is as follows. One of the primary rRNA binding proteins, it binds specifically to the 5'-end of 16S ribosomal RNA. The sequence is that of Small ribosomal subunit protein uS17 from Nitrosospira multiformis (strain ATCC 25196 / NCIMB 11849 / C 71).